The sequence spans 161 residues: Small ribosomal subunit protein uS9 (161 aa).

The span at 1-21 (MATLQSLADLNRANTQTSNPE) shows a compositional bias: polar residues. The interval 1–25 (MATLQSLADLNRANTQTSNPENEAP) is disordered.

This sequence belongs to the universal ribosomal protein uS9 family.

The sequence is that of Small ribosomal subunit protein uS9 from Methylorubrum populi (strain ATCC BAA-705 / NCIMB 13946 / BJ001) (Methylobacterium populi).